A 1280-amino-acid chain; its full sequence is Dynactin subunit 1 (1280 aa).

The segment at 1–26 (MAQSKRHMYNRTPSGSRMSTEASARP) is disordered. The segment covering 11-22 (RTPSGSRMSTEA) has biased composition (polar residues). Residues 48–90 (GATLFATGKWVGVILDEAKGKNDGTVQGRKYFTCDEGHGIFVR) form the CAP-Gly domain. The tract at residues 99–223 (DGADTTSPET…SKEEEGLRDQ (125 aa)) is disordered. Positions 102–114 (DTTSPETPDSSAS) are enriched in polar residues. Residues Thr108, Thr145, Thr146, and Thr147 each carry the phosphothreonine modification. Residues 129–152 (SKLRGLKPKKAPTARKTTTRRPKP) show a composition bias toward basic residues. A compositionally biased stretch (low complexity) spans 161 to 205 (AGPSSSLGPSGSASAGELSSSEPSTPAQTPLAAPIIPTPALTSPG). Ser179 carries the post-translational modification Phosphoserine; by PLK1. Ser212 is modified (phosphoserine; by CDK1). The segment covering 214–223 (SKEEEGLRDQ) has biased composition (basic and acidic residues). Coiled-coil stretches lie at residues 214–513 (SKEE…ADYQ) and 942–1048 (LKLE…EGLR). The tract at residues 910–1280 (EYDAERPPSK…LHQLHGRLIS (371 aa)) is interaction with HPS6. A disordered region spans residues 1064–1089 (GEEQQRGGTPGQAPGALPGPGPVKDS). Residues 1184–1213 (SAQLMEQVAQLKSLSDTIEKLKDEVLKETV) are a coiled coil.

It belongs to the dynactin 150 kDa subunit family. Monomer and homodimer. Subunit of dynactin, a multiprotein complex part of a tripartite complex with dynein and a adapter, such as BICDL1, BICD2 or HOOK3. The dynactin complex is built around ACTR1A/ACTB filament and consists of an actin-related filament composed of a shoulder domain, a pointed end and a barbed end. Its length is defined by its flexible shoulder domain. The soulder is composed of 2 DCTN1 subunits, 4 DCTN2 and 2 DCTN3. DCTN1/p150(glued) binds directly to microtubules and to cytoplasmic dynein. The 4 DCNT2 (via N-terminus) bind the ACTR1A filament and act as molecular rulers to determine the length. The pointed end is important for binding dynein-dynactin cargo adapters. Consists of 4 subunits: ACTR10, DCNT4, DCTN5 and DCTN6. The barbed end is composed of a CAPZA1:CAPZB heterodimers, which binds ACTR1A/ACTB filament and dynactin and stabilizes dynactin. Interacts with the C-terminus of MAPRE1, MAPRE2 and MAPRE3. Interacts (via C-terminus) with SNX6. Interacts with CLN3, DYNAP, ECPAS and FBXL5. Interacts with MISP; this interaction regulates its distribution at the cell cortex. Interacts with CEP131. Interacts with CEP126. Interacts with CLIP1. Interacts with dynein intermediate chain and dynein heavy chain. Interacts with PLK1 (via POLO-box domain). Interacts with TBCB. Binds preferentially to tyrosinated microtubules than to detyrosinated microtubules. Interacts with PARD6A. Interacts with HPS6. Interacts with KIF3A. Interacts with BICD2. Interacts with DST (isoform 9). Interacts with DST (isoform 1). Identified in a complex with MREG and RILP. Interacts with BCCIP (isoform 2/alpha). Interacts with DCDC1. Interacts with AKNA. Interacts with DYNC1I2. Interacts with RUFY3 and RUFY4. Post-translationally, ubiquitinated by a SCF complex containing FBXL5, leading to its degradation by the proteasome. In terms of processing, phosphorylation by SLK at Thr-145, Thr-146 and Thr-147 targets DCTN1 to the centrosome. It is uncertain if SLK phosphorylates all three threonines or one or two of them. PLK1-mediated phosphorylation at Ser-179 is essential for its localization in the nuclear envelope and promotes its dissociation from microtubules during early mitosis and positively regulates nuclear envelope breakdown during prophase. In terms of tissue distribution, ubiquitous with a high level expression observed in the brain (at protein level).

It is found in the cytoplasm. Its subcellular location is the cytoskeleton. The protein resides in the microtubule organizing center. The protein localises to the centrosome. It localises to the centriole. It is found in the spindle. Its subcellular location is the nucleus envelope. The protein resides in the cell cortex. Part of the dynactin complex that activates the molecular motor dynein for ultra-processive transport along microtubules. Plays a key role in dynein-mediated retrograde transport of vesicles and organelles along microtubules by recruiting and tethering dynein to microtubules. Binds to both dynein and microtubules providing a link between specific cargos, microtubules and dynein. Essential for targeting dynein to microtubule plus ends, recruiting dynein to membranous cargos and enhancing dynein processivity (the ability to move along a microtubule for a long distance without falling off the track). Can also act as a brake to slow the dynein motor during motility along the microtubule. Can regulate microtubule stability by promoting microtubule formation, nucleation and polymerization and by inhibiting microtubule catastrophe in neurons. Inhibits microtubule catastrophe by binding both to microtubules and to tubulin, leading to enhanced microtubule stability along the axon. Plays a role in metaphase spindle orientation. Plays a role in centriole cohesion and subdistal appendage organization and function. Its recruitment to the centriole in a KIF3A-dependent manner is essential for the maintenance of centriole cohesion and the formation of subdistal appendage. Also required for microtubule anchoring at the mother centriole. Plays a role in primary cilia formation. The protein is Dynactin subunit 1 (Dctn1) of Rattus norvegicus (Rat).